The following is a 251-amino-acid chain: Uridylate kinase (251 aa).

An ATP-binding site is contributed by 19 to 22 (KLSG). Gly61 is a binding site for UMP. ATP is bound by residues Gly62 and Arg66. UMP-binding positions include Asp81 and 142 to 149 (IGNPFFTT). ATP is bound by residues Thr169, Gln170, Tyr175, and Asp178.

It belongs to the UMP kinase family. In terms of assembly, homohexamer.

The protein localises to the cytoplasm. The catalysed reaction is UMP + ATP = UDP + ADP. It participates in pyrimidine metabolism; CTP biosynthesis via de novo pathway; UDP from UMP (UMPK route): step 1/1. Its activity is regulated as follows. Inhibited by UTP. Functionally, catalyzes the reversible phosphorylation of UMP to UDP. In Hyphomonas neptunium (strain ATCC 15444), this protein is Uridylate kinase.